A 340-amino-acid chain; its full sequence is Protein-lysine N-methyltransferase EEF2KMT (340 aa).

Position 1 is an N-acetylmethionine (Met-1). S-adenosyl-L-methionine contacts are provided by residues Trp-139, 165-167, Trp-238, and Ala-257; that span reads GSG.

Belongs to the class I-like SAM-binding methyltransferase superfamily. EEF2KMT family. Interacts with FAM86B2 and FAM86C1P.

The protein localises to the cytoplasm. It carries out the reaction L-lysyl-[protein] + 3 S-adenosyl-L-methionine = N(6),N(6),N(6)-trimethyl-L-lysyl-[protein] + 3 S-adenosyl-L-homocysteine + 3 H(+). Functionally, catalyzes the trimethylation of eukaryotic elongation factor 2 (EEF2) on 'Lys-525'. The protein is Protein-lysine N-methyltransferase EEF2KMT (EEF2KMT) of Bos taurus (Bovine).